The primary structure comprises 282 residues: Hydroxyacylglutathione hydrolase-like protein (282 aa).

Zn(2+) contacts are provided by His-54, His-56, Asp-58, His-59, His-110, Asp-134, and His-173.

Belongs to the metallo-beta-lactamase superfamily. Glyoxalase II family. The cofactor is Zn(2+).

Hydrolase acting on ester bonds. The polypeptide is Hydroxyacylglutathione hydrolase-like protein (HAGHL) (Gallus gallus (Chicken)).